Reading from the N-terminus, the 352-residue chain is Adenosine deaminase (352 aa).

Alanine 2 is modified (N-acetylalanine). 2 residues coordinate Zn(2+): histidine 15 and histidine 17. The substrate site is built by histidine 17 and aspartate 19. Lysine 54 is subject to N6-acetyllysine. Glycine 184 contacts substrate. Histidine 214 serves as a coordination point for Zn(2+). Residue glutamate 217 is the Proton donor of the active site. An N6-acetyllysine modification is found at lysine 232. Aspartate 295 lines the Zn(2+) pocket. Aspartate 296 contributes to the substrate binding site.

This sequence belongs to the metallo-dependent hydrolases superfamily. Adenosine and AMP deaminases family. In terms of assembly, interacts with DPP4 (via extracellular domain). Interacts with PLG (via Kringle 4 domain); the interaction stimulates PLG activation when in complex with DPP4. The cofactor is Zn(2+). Detected in brain neurons in the median emninence (at protein level). Expressed in secondary deciduum (at protein level). Found in all tissues, occurs in large amounts in T-lymphocytes and, at the time of weaning, in gastrointestinal tissues.

It localises to the cell membrane. The protein resides in the cell junction. Its subcellular location is the cytoplasmic vesicle lumen. The protein localises to the cytoplasm. It is found in the lysosome. It catalyses the reaction adenosine + H2O + H(+) = inosine + NH4(+). It carries out the reaction 2'-deoxyadenosine + H2O + H(+) = 2'-deoxyinosine + NH4(+). The enzyme catalyses cordycepin + H2O + H(+) = 3'-deoxyinosine + NH4(+). Catalyzes the hydrolytic deamination of adenosine and 2-deoxyadenosine. Plays an important role in purine metabolism and in adenosine homeostasis. Modulates signaling by extracellular adenosine, and so contributes indirectly to cellular signaling events. Acts as a positive regulator of T-cell coactivation, by binding DPP4. Its interaction with DPP4 regulates lymphocyte-epithelial cell adhesion. Enhances dendritic cell immunogenicity by affecting dendritic cell costimulatory molecule expression and cytokines and chemokines secretion. Enhances CD4+ T-cell differentiation and proliferation. Acts as a positive modulator of adenosine receptors ADORA1 and ADORA2A, by enhancing their ligand affinity via conformational change. Stimulates plasminogen activation. Plays a role in male fertility. Plays a protective role in early postimplantation embryonic development. Also responsible for the deamination of cordycepin (3'-deoxyadenosine), a fungal natural product that shows antitumor, antibacterial, antifungal, antivirus, and immune regulation properties. In Mus musculus (Mouse), this protein is Adenosine deaminase (Ada).